The primary structure comprises 208 residues: Uracil phosphoribosyltransferase (208 aa).

5-phospho-alpha-D-ribose 1-diphosphate contacts are provided by residues arginine 78, arginine 103, and 130–138; that span reads DPMLATGGS. Uracil is bound by residues isoleucine 193 and 198–200; that span reads GDA. Aspartate 199 serves as a coordination point for 5-phospho-alpha-D-ribose 1-diphosphate.

The protein belongs to the UPRTase family. Mg(2+) serves as cofactor.

It catalyses the reaction UMP + diphosphate = 5-phospho-alpha-D-ribose 1-diphosphate + uracil. It functions in the pathway pyrimidine metabolism; UMP biosynthesis via salvage pathway; UMP from uracil: step 1/1. Its activity is regulated as follows. Allosterically activated by GTP. Its function is as follows. Catalyzes the conversion of uracil and 5-phospho-alpha-D-ribose 1-diphosphate (PRPP) to UMP and diphosphate. This Photorhabdus laumondii subsp. laumondii (strain DSM 15139 / CIP 105565 / TT01) (Photorhabdus luminescens subsp. laumondii) protein is Uracil phosphoribosyltransferase.